Consider the following 553-residue polypeptide: Zinc finger protein with KRAB and SCAN domains 3 (553 aa).

The tract at residues 28 to 49 is disordered; sequence EQEESSPLAEETSWLGSPGPDR. Ser33 and Ser44 each carry phosphoserine. The SCAN box domain occupies 51 to 133; it reads RQRFRAFRYP…ALLEYLDRQL (83 aa). The residue at position 136 (Thr136) is a Phosphothreonine. Lys176 participates in a covalent cross-link: Glycyl lysine isopeptide (Lys-Gly) (interchain with G-Cter in SUMO2). The residue at position 206 (Thr206) is a Phosphothreonine. The KRAB domain occupies 213–273; sequence LKMEDVAPVL…RAEEYRDQKP (61 aa). Ser223 is subject to Phosphoserine. 5 consecutive C2H2-type zinc fingers follow at residues 313–335, 341–363, 369–391, 397–419, and 425–447; these read FYCR…KRIH, YECE…QRVH, YECE…QRTH, YECD…HRIH, and YQCN…QRTH. Thr448 bears the Phosphothreonine mark. 2 C2H2-type zinc fingers span residues 479 to 501 and 507 to 529; these read YQCN…QKVH and FECQ…QRRH.

The protein belongs to the krueppel C2H2-type zinc-finger protein family. Expressed in heart, brain, spleen, lung, liver, skeletal muscle, kidney and testis.

The protein resides in the nucleus. It is found in the cytoplasm. Transcriptional factor that binds to the consensus sequence 5'-[GT][AG][AGT]GGGG-3' and acts as a repressor of autophagy. Specifically represses expression of genes involved in autophagy and lysosome biogenesis/function such as MAP1LC3B, ULK1 or WIPI2. Associates with chromatin at the ITGB4 and VEGF promoters. The polypeptide is Zinc finger protein with KRAB and SCAN domains 3 (Zkscan3) (Mus musculus (Mouse)).